The chain runs to 145 residues: Large ribosomal subunit protein uL15 (145 aa).

The interval 1–50 (MLHTIKPVANARKTTKRLGRGPGSGTGKTSGKGHKGQLARSGKTLRPGFE) is disordered. A compositionally biased stretch (gly residues) spans 20–30 (RGPGSGTGKTS).

This sequence belongs to the universal ribosomal protein uL15 family. As to quaternary structure, part of the 50S ribosomal subunit.

In terms of biological role, binds to the 23S rRNA. The protein is Large ribosomal subunit protein uL15 of Phytoplasma australiense.